The chain runs to 179 residues: Cell division protein ZapC (179 aa).

Belongs to the ZapC family. Interacts directly with FtsZ.

The protein resides in the cytoplasm. Contributes to the efficiency of the cell division process by stabilizing the polymeric form of the cell division protein FtsZ. Acts by promoting interactions between FtsZ protofilaments and suppressing the GTPase activity of FtsZ. The sequence is that of Cell division protein ZapC from Ferrimonas balearica (strain DSM 9799 / CCM 4581 / KCTC 23876 / PAT).